The sequence spans 407 residues: (R)-phenyllactyl-CoA dehydratase alpha subunit (407 aa).

A propeptide spanning residues 1–4 is cleaved from the precursor; it reads MSDR.

Belongs to the FldB/FldC dehydratase alpha/beta subunit family. In terms of assembly, part of the heterotrimeric phenyllactate dehydratase complex FldABC, composed of (R)-phenyllactate CoA-transferase (FldA) and a heterodimeric (R)-phenyllactyl-CoA dehydratase (FldB and FldC). [4Fe-4S] cluster serves as cofactor. The cofactor is No flavin could be detected in the FldABC complex, and the addition of FAD, FMN or riboflavin to the dehydratase do not increase enzymatic activity..

The enzyme catalyses (R)-3-phenyllactoyl-CoA = (E)-cinnamoyl-CoA + H2O. The catalysed reaction is (R)-3-(4-hydroxyphenyl)lactoyl-CoA = (E)-4-coumaroyl-CoA + H2O. It catalyses the reaction (R)-3-(indol-3-yl)lactoyl-CoA = (E)-3-(indol-3-yl)acryloyl-CoA + H2O. Its pathway is amino-acid degradation; L-phenylalanine degradation. In terms of biological role, component of the phenyllactate dehydratase complex FldABC that is involved in the fermentation of L-phenylalanine via a Stickland reaction. This complex catalyzes the reversible syn-dehydration of (R)-phenyllactate to (E)-cinnamate in two steps, a CoA-transfer from cinnamoyl-CoA to phenyllactate, catalyzed by FldA, followed by the dehydration of phenyllactyl-CoA to cinnamoyl-CoA, catalyzed by FldB and FldC. Requires the activator FldI to initiate catalysis. This is (R)-phenyllactyl-CoA dehydratase alpha subunit from Clostridium sporogenes.